Consider the following 738-residue polypeptide: Zinc finger protein 235 (738 aa).

Residues 8–79 (VTFKDVAVAF…ELQTQRGKHS (72 aa)) form the KRAB domain. The C2H2-type 1; degenerate zinc finger occupies 263-285 (YQGNECEEAFNDSSSLELHKQVH). 15 C2H2-type zinc fingers span residues 319–341 (YWCH…QRVH), 347–369 (YTCH…LPIH), 375–397 (YRCD…CRVH), 403–425 (YKCE…ERIH), 431–453 (YKCG…QRVH), 459–481 (YKCD…QRVH), 487–509 (YKCE…QRVH), 515–537 (FRCN…QRVH), 543–565 (YKCE…QRVH), 571–593 (YKCE…QSVH), 599–621 (FKCD…QRVH), 627–649 (YKCD…QIIH), 655–677 (FKCE…QRVH), 683–705 (YTCQ…QRVH), and 711–733 (YICD…QRVH).

It belongs to the krueppel C2H2-type zinc-finger protein family.

It localises to the nucleus. Its function is as follows. May be involved in transcriptional regulation. This chain is Zinc finger protein 235 (ZNF235), found in Homo sapiens (Human).